The following is a 1724-amino-acid chain: Sperm flagellar protein 2 (1724 aa).

Residues 1 to 105 (MSEILCQWLN…LLYQLYIALQ (105 aa)) form the Calponin-homology (CH) domain. Coiled coils occupy residues 170–203 (KAIE…KDLQ) and 255–351 (RRLL…REKE). The interval 545–576 (HERQKSGKTPPTQEDDKRDPVVNQEKVSKTQD) is disordered. Residues 558–576 (EDDKRDPVVNQEKVSKTQD) are compositionally biased toward basic and acidic residues. Residues 665-691 (NQAKLLEEALTGYKRKFLQLKKKKEQM) adopt a coiled-coil conformation. The interval 828–910 (EEKETEKKAG…PTAPPPPKAG (83 aa)) is disordered. Positions 853 to 862 (EAEKDKELHQ) are enriched in basic and acidic residues. The stretch at 995–1021 (EDLWEDEETKAELHQRVNDLRDRLWDI) forms a coiled coil. Positions 1177–1194 (RLTEEEKEPPQLDSKEKS) are enriched in basic and acidic residues. 3 disordered regions span residues 1177 to 1241 (RLTE…EMAE), 1580 to 1618 (VSPI…NANT), and 1704 to 1724 (SEHA…DEKK). Over residues 1210–1221 (PKKKKTDKKGKG) the composition is skewed to basic residues. Residues 1228–1580 (EVSPVTVTPE…MAEKTSISTV (353 aa)) form an interaction with IFT20 region. Basic and acidic residues predominate over residues 1592 to 1607 (SSAKEDRELKEEKDDQ).

In terms of assembly, interacts (via C-terminus) with IFT20. Interacts with DYNC1I2. In terms of tissue distribution, highly expressed in testis, where it primarily localizes to late spermatocytes, round spermatids and elongating spermatids (at protein level). Found in Sertoli cells of the testis (at protein level). Expressed at lower levels in epididymis (at protein level). Detected in lung, brain, liver and kidney. Also detected in bone, cartilage, trachea, pituitary gland and eye. Expressed in osteoblasts and chondrocytes.

The protein localises to the cell projection. It is found in the cilium. Its subcellular location is the flagellum. The protein resides in the cytoplasm. It localises to the cytoskeleton. The protein localises to the golgi apparatus. In terms of biological role, required for correct axoneme development in spermatozoa. Important for normal development of the manchette and sperm head morphology. Essential for male fertility. Plays a role in localization of the intraflagellar transport protein IFT20 to the manchette, suggesting function as an adapter for dynein-mediated protein transport during spermatogenesis. Also plays a role in bone growth where it seems to be required for normal osteoblast differentiation. The polypeptide is Sperm flagellar protein 2 (Spef2) (Mus musculus (Mouse)).